The sequence spans 292 residues: Insulin-like growth factor-binding protein 3 (292 aa).

An N-terminal signal peptide occupies residues 1-27 (MHPARPALWAAALTALTLLRGPPVARA). In terms of domain architecture, IGFBP N-terminal spans 36–119 (PVVRCEPCDA…LNGRGFCANA (84 aa)). 6 disulfides stabilise this stretch: Cys-40–Cys-69, Cys-43–Cys-71, Cys-51–Cys-72, Cys-60–Cys-75, Cys-83–Cys-96, and Cys-90–Cys-116. 2 N-linked (GlcNAc...) asparagine glycosylation sites follow: Asn-118 and Asn-137. Disordered regions lie at residues 128–152 (YLPS…SVES) and 178–212 (KGHA…TEYG). Ser-149 carries the post-translational modification Phosphoserine. Positions 178-191 (KGHARDSQRYKVDY) are enriched in basic and acidic residues. The span at 192 to 203 (ESQSTDTQNFSS) shows a compositional bias: polar residues. N-linked (GlcNAc...) asparagine glycosylation is present at Asn-200. Ser-202 carries the post-translational modification Phosphoserine. The Thyroglobulin type-1 domain occupies 211–286 (YGPCRREMED…DTKGKDDVHC (76 aa)). 3 disulfide bridges follow: Cys-214/Cys-241, Cys-252/Cys-263, and Cys-265/Cys-286.

In terms of assembly, interacts with XLKD1. Binds IGF2 more than IGF1. Forms a ternary complex of about 140 to 150 kDa with IGF1 or IGF2 and a 85 kDa glycoprotein (ALS). Interacts with TMEM219. In terms of processing, phosphorylated by FAM20C in the extracellular medium.

It localises to the secreted. Its function is as follows. IGF-binding proteins prolong the half-life of the IGFs and have been shown to either inhibit or stimulate the growth promoting effects of the IGFs on cell culture. They alter the interaction of IGFs with their cell surface receptors. Also exhibits IGF-independent antiproliferative and apoptotic effects mediated by its receptor TMEM219/IGFBP-3R. Promotes testicular germ cell apoptosis. In Mus musculus (Mouse), this protein is Insulin-like growth factor-binding protein 3 (Igfbp3).